Reading from the N-terminus, the 208-residue chain is Adenylyl-sulfate kinase (208 aa).

35 to 42 (GLSGSGKS) provides a ligand contact to ATP. The active-site Phosphoserine intermediate is Ser-109.

The protein belongs to the APS kinase family.

The enzyme catalyses adenosine 5'-phosphosulfate + ATP = 3'-phosphoadenylyl sulfate + ADP + H(+). It functions in the pathway sulfur metabolism; hydrogen sulfide biosynthesis; sulfite from sulfate: step 2/3. In terms of biological role, catalyzes the synthesis of activated sulfate. The polypeptide is Adenylyl-sulfate kinase (Geotalea uraniireducens (strain Rf4) (Geobacter uraniireducens)).